A 663-amino-acid polypeptide reads, in one-letter code: Rho GTPase-activating protein 18 (663 aa).

The segment at 15 to 37 (YHPSGKDQTVGNSHAKAGEEATS) is disordered. A phosphoserine mark is found at Ser-66 and Ser-69. At Thr-158 the chain carries Phosphothreonine. 2 disordered regions span residues 179–227 (RESK…PAPE) and 243–277 (QKESSKEKIQKSKGDDATLPSFRLPKDKTGTTRIG). Composition is skewed to basic and acidic residues over residues 197 to 219 (NENKYQGRDDEASNLVGEEKLIP) and 245 to 258 (ESSKEKIQKSKGDD). The residue at position 263 (Ser-263) is a Phosphoserine. The 200-residue stretch at 324–523 (VPLTALLEQD…LLIKYQKLLW (200 aa)) folds into the Rho-GAP domain. Position 610 is a phosphoserine (Ser-610).

In terms of assembly, interacts with MPHOSPH6.

It is found in the cytoplasm. Rho GTPase activating protein that suppresses F-actin polymerization by inhibiting Rho. Rho GTPase activating proteins act by converting Rho-type GTPases to an inactive GDP-bound state. Plays a key role in tissue tension and 3D tissue shape by regulating cortical actomyosin network formation. Acts downstream of YAP1 and inhibits actin polymerization, which in turn reduces nuclear localization of YAP1. Regulates cell shape, spreading, and migration. The chain is Rho GTPase-activating protein 18 from Homo sapiens (Human).